A 197-amino-acid polypeptide reads, in one-letter code: Non-structural protein 5 (197 aa).

Residues 17–30 (IFKNESSSTTSTLS) are compositionally biased toward low complexity. Residues 17 to 36 (IFKNESSSTTSTLSGKSIGR) form a disordered region. Serine 67 is subject to Phosphoserine; by host CK1. Aspartate 92 contributes to the Mg(2+) binding site. A disordered region spans residues 131–167 (DHKKEKSKKDKSRKHYPRIEADSDSEDYVLDDSDSDD). Residues 152–165 (DSDSEDYVLDDSDS) show a composition bias toward acidic residues. 4 positions are modified to phosphoserine; by host: serine 153, serine 155, serine 163, and serine 165.

The protein belongs to the rotavirus NSP5 family. As to quaternary structure, homodimer. Interacts with VP1. Interacts with VP2. Interacts with NSP2; this interaction leads to up-regulation of NSP5 hyperphosphorylation and formation of virus factories. Interacts with NSP6. Participates in the selective exclusion of host proteins from stress granules (SG) and P bodies (PB). Also participates in the sequestration of these remodeled organelles in viral factories. It depends on Mg(2+) as a cofactor. Post-translationally, O-glycosylated. In terms of processing, hyperphosphorylated on serine residues, when in dimeric form. Phosphorylation by host CK1 is required for the hyperphosphorylation of NSP5 dimer.

It is found in the host cytoplasm. Its function is as follows. Plays an essential role in the viral genome replication. Participates, together with NSP2, in the formation of viral factories (viroplasms), which are large inclusions in the host cytoplasm where replication intermediates are assembled and viral RNA replication takes place. Orchestrates the recruitment of viroplasmic proteins such as capsid proteins to these factories. Participates in the selective exclusion of host proteins from stress granules (SG) and P bodies (PB). Also participates in the sequestration of these remodeled organelles in viral factories. This is Non-structural protein 5 from Homo sapiens (Human).